The chain runs to 544 residues: Methionine--tRNA ligase 2 (544 aa).

The 'HIGH' region motif lies at 10-20 (PYANGSLHLGH). Zn(2+) is bound by residues Cys-141, Cys-144, Cys-153, and Cys-156. The short motif at 329–333 (KLSTS) is the 'KMSKS' region element. ATP is bound at residue Thr-332.

The protein belongs to the class-I aminoacyl-tRNA synthetase family. MetG type 1 subfamily. Monomer. The cofactor is Zn(2+).

The protein localises to the cytoplasm. The enzyme catalyses tRNA(Met) + L-methionine + ATP = L-methionyl-tRNA(Met) + AMP + diphosphate. Is required not only for elongation of protein synthesis but also for the initiation of all mRNA translation through initiator tRNA(fMet) aminoacylation. The protein is Methionine--tRNA ligase 2 of Bacillus anthracis.